The sequence spans 132 residues: Large-conductance mechanosensitive channel (132 aa).

Transmembrane regions (helical) follow at residues V14–L34, I38–G58, and G67–I87.

Belongs to the MscL family. As to quaternary structure, homopentamer.

The protein resides in the cell membrane. Channel that opens in response to stretch forces in the membrane lipid bilayer. May participate in the regulation of osmotic pressure changes within the cell. This Bacillus cereus (strain G9842) protein is Large-conductance mechanosensitive channel.